An 882-amino-acid chain; its full sequence is Valine--tRNA ligase (882 aa).

The 'HIGH' region motif lies at 42–52 (PNVTGKLHLGH). The short motif at 522 to 526 (KMSKS) is the 'KMSKS' region element. Position 525 (Lys525) interacts with ATP. A coiled-coil region spans residues 849–873 (KIEIEKKKYESYCKQYKKLLESKNN).

This sequence belongs to the class-I aminoacyl-tRNA synthetase family. ValS type 1 subfamily. Monomer.

It localises to the cytoplasm. The enzyme catalyses tRNA(Val) + L-valine + ATP = L-valyl-tRNA(Val) + AMP + diphosphate. Catalyzes the attachment of valine to tRNA(Val). As ValRS can inadvertently accommodate and process structurally similar amino acids such as threonine, to avoid such errors, it has a 'posttransfer' editing activity that hydrolyzes mischarged Thr-tRNA(Val) in a tRNA-dependent manner. This is Valine--tRNA ligase from Onion yellows phytoplasma (strain OY-M).